We begin with the raw amino-acid sequence, 212 residues long: External core antigen (212 aa).

The signal sequence occupies residues 1–19 (MQLFHLCLIISCSCPTVQA). The interval 25–27 (GWL) is HBEAG. A disordered region spans residues 165-212 (NAPILSTLPETTVVRRRGRSPRRRTPSPRRRRSQSPRRRRSQSRESQC). A compositionally biased stretch (basic residues) spans 178–205 (VRRRGRSPRRRTPSPRRRRSQSPRRRRS). The 1; half-length repeat unit spans residues 184-190 (SPRRRTP). Residues 184–206 (SPRRRTPSPRRRRSQSPRRRRSQ) are 3 X 8 AA repeats of S-P-R-R-R-R-S-Q. Positions 184–212 (SPRRRTPSPRRRRSQSPRRRRSQSRESQC) are excised as a propeptide. Repeat copies occupy residues 191–198 (SPRRRRSQ) and 199–206 (SPRRRRSQ).

Belongs to the orthohepadnavirus precore antigen family. In terms of assembly, homodimerizes. Phosphorylated. In terms of processing, cleaved by host furin.

Its subcellular location is the secreted. It localises to the host nucleus. In terms of biological role, may regulate immune response to the intracellular capsid in acting as a T-cell tolerogen, by having an immunoregulatory effect which prevents destruction of infected cells by cytotoxic T-cells. This immune regulation may predispose to chronicity during perinatal infections and prevent severe liver injury during adult infections. This is External core antigen from Hepatitis B virus genotype B2 (isolate Indonesia/pIDW420/1988) (HBV-B).